The primary structure comprises 446 residues: ATP synthase subunit b-delta (446 aa).

The ATP synthase subunit b stretch occupies residues 1–168 (MSTFIGQLFG…PATADVDYPL (168 aa)). A helical membrane pass occupies residues 4–24 (FIGQLFGFAVIVYLVWRFIVP). Positions 169–446 (LAKMRSASRR…LAAAEARLPD (278 aa)) are ATP synthase subunit delta.

This sequence in the N-terminal section; belongs to the ATPase B chain family. The protein in the C-terminal section; belongs to the ATPase delta chain family. As to quaternary structure, F-type ATPases have 2 components, F(1) - the catalytic core - and F(0) - the membrane proton channel. F(1) has five subunits: alpha(3), beta(3), gamma(1), delta(1), epsilon(1). F(0) has three main subunits: a(1), b(2) and c(10-14). The alpha and beta chains form an alternating ring which encloses part of the gamma chain. F(1) is attached to F(0) by a central stalk formed by the gamma and epsilon chains, while a peripheral stalk is formed by the delta and b chains.

Its subcellular location is the cell membrane. In terms of biological role, f(1)F(0) ATP synthase produces ATP from ADP in the presence of a proton or sodium gradient. F-type ATPases consist of two structural domains, F(1) containing the extramembraneous catalytic core and F(0) containing the membrane proton channel, linked together by a central stalk and a peripheral stalk. During catalysis, ATP synthesis in the catalytic domain of F(1) is coupled via a rotary mechanism of the central stalk subunits to proton translocation. Functionally, this fusion protein includes a component of the F(0) channel (subunit b) and of the F(1) subunit (subunit delta). Two copies of subunit b and one of delta together form the peripheral 'stator' stalk which links F(1) to F(0). This chain is ATP synthase subunit b-delta (atpFH), found in Mycobacterium tuberculosis (strain CDC 1551 / Oshkosh).